The sequence spans 225 residues: Uridylate kinase (225 aa).

7-11 contacts ATP; it reads KISGS. G44 lines the UMP pocket. The ATP site is built by G45 and R49. Residues D66 and 114-120 contribute to the UMP site; that span reads FQPGQST. Positions 147 and 150 each coordinate ATP.

Belongs to the UMP kinase family. In terms of assembly, homohexamer.

Its subcellular location is the cytoplasm. The enzyme catalyses UMP + ATP = UDP + ADP. It functions in the pathway pyrimidine metabolism; CTP biosynthesis via de novo pathway; UDP from UMP (UMPK route): step 1/1. Inhibited by UTP. Catalyzes the reversible phosphorylation of UMP to UDP. The protein is Uridylate kinase of Aeropyrum pernix (strain ATCC 700893 / DSM 11879 / JCM 9820 / NBRC 100138 / K1).